A 447-amino-acid polypeptide reads, in one-letter code: Chromosomal replication initiator protein DnaA (447 aa).

Residues 1–79 (MVSCENLWQQ…TGQEITVKLI (79 aa)) form a domain I, interacts with DnaA modulators region. Residues 79-105 (ITDGLEPHSLIGQESSLPMETTPKNAT) form a domain II region. Residues 106–322 (ALNGKYTFSR…GALIRAIAYT (217 aa)) form a domain III, AAA+ region region. Residues G150, G152, K153, and T154 each coordinate ATP. The tract at residues 323–447 (SLSNVAMTVE…INIAGQAPES (125 aa)) is domain IV, binds dsDNA.

The protein belongs to the DnaA family. Oligomerizes as a right-handed, spiral filament on DNA at oriC.

It is found in the cytoplasm. Its function is as follows. Plays an essential role in the initiation and regulation of chromosomal replication. ATP-DnaA binds to the origin of replication (oriC) to initiate formation of the DNA replication initiation complex once per cell cycle. Binds the DnaA box (a 9 base pair repeat at the origin) and separates the double-stranded (ds)DNA. Forms a right-handed helical filament on oriC DNA; dsDNA binds to the exterior of the filament while single-stranded (ss)DNA is stabiized in the filament's interior. The ATP-DnaA-oriC complex binds and stabilizes one strand of the AT-rich DNA unwinding element (DUE), permitting loading of DNA polymerase. After initiation quickly degrades to an ADP-DnaA complex that is not apt for DNA replication. Binds acidic phospholipids. Isolated domain IV (residues 348-447) binds both E.coli and B.subtilis oriC. In Synechocystis sp. (strain ATCC 27184 / PCC 6803 / Kazusa), this protein is Chromosomal replication initiator protein DnaA.